Here is a 104-residue protein sequence, read N- to C-terminus: DNA-directed RNA polymerase subunit omega (104 aa).

The disordered stretch occupies residues 76–104 (IEEEKRRKEEEEKKIKEQIAKEKEDGEKI).

This sequence belongs to the RNA polymerase subunit omega family. The RNAP catalytic core consists of 2 alpha, 1 beta, 1 beta' and 1 omega subunit. When a sigma factor is associated with the core the holoenzyme is formed, which can initiate transcription.

It carries out the reaction RNA(n) + a ribonucleoside 5'-triphosphate = RNA(n+1) + diphosphate. Its function is as follows. Promotes RNA polymerase assembly. Latches the N- and C-terminal regions of the beta' subunit thereby facilitating its interaction with the beta and alpha subunits. This chain is DNA-directed RNA polymerase subunit omega, found in Streptococcus pneumoniae (strain CGSP14).